The primary structure comprises 366 residues: Alanine racemase (366 aa).

Lysine 40 (proton acceptor; specific for D-alanine) is an active-site residue. Residue lysine 40 is modified to N6-(pyridoxal phosphate)lysine. Substrate is bound at residue arginine 136. Tyrosine 263 (proton acceptor; specific for L-alanine) is an active-site residue. Methionine 310 lines the substrate pocket.

The protein belongs to the alanine racemase family. Pyridoxal 5'-phosphate is required as a cofactor.

It carries out the reaction L-alanine = D-alanine. It participates in amino-acid biosynthesis; D-alanine biosynthesis; D-alanine from L-alanine: step 1/1. In terms of biological role, catalyzes the interconversion of L-alanine and D-alanine. May also act on other amino acids. The protein is Alanine racemase (alr) of Streptococcus pyogenes serotype M5 (strain Manfredo).